A 213-amino-acid chain; its full sequence is Orotate phosphoribosyltransferase (213 aa).

K26 contributes to the 5-phospho-alpha-D-ribose 1-diphosphate binding site. Residue 34-35 participates in orotate binding; that stretch reads FF. Residues 72-73, R99, K100, K103, H105, and 124-132 each bind 5-phospho-alpha-D-ribose 1-diphosphate; these read YK and DDVITAGTA. Orotate contacts are provided by T128 and R156.

The protein belongs to the purine/pyrimidine phosphoribosyltransferase family. PyrE subfamily. In terms of assembly, homodimer. It depends on Mg(2+) as a cofactor.

The enzyme catalyses orotidine 5'-phosphate + diphosphate = orotate + 5-phospho-alpha-D-ribose 1-diphosphate. The protein operates within pyrimidine metabolism; UMP biosynthesis via de novo pathway; UMP from orotate: step 1/2. Its function is as follows. Catalyzes the transfer of a ribosyl phosphate group from 5-phosphoribose 1-diphosphate to orotate, leading to the formation of orotidine monophosphate (OMP). This Pectobacterium carotovorum subsp. carotovorum (strain PC1) protein is Orotate phosphoribosyltransferase.